The sequence spans 66 residues: uncharacterized protein (66 aa).

Residues Met1–Ala20 form a hydrophobic region.

This is an uncharacterized protein from Streptomyces lividans.